The following is a 298-amino-acid chain: Deleted in azoospermia-like (298 aa).

Residues 1–27 form a disordered region; it reads MSATTSEAPNSAVSREASTQSSSATTS. Residues 11-27 show a composition bias toward low complexity; the sequence is SAVSREASTQSSSATTS. The region spanning 40-115 is the RRM domain; it reads NTVFVGGIDV…KKLKLGPAIR (76 aa). Residues 80–132 form a homodimerization region; it reads KGYGFVSFYNDVDVQKIVESQINFHGKKLKLGPAIRKQNLCTYHVQPRPLIFN. A DAZ domain is found at 167–190; the sequence is AYPPYPSSPVQVITGYQLPVYNYQ. At tyrosine 276 the chain carries Phosphotyrosine.

The protein belongs to the RRM DAZ family. As to quaternary structure, homodimer and heterodimer. Forms a heterodimer with DAZ. Interacts with BOLL, DAZAP1 and DAZAP2. Interacts with PUM2. Multiple DAZL RRMs can bind to a single RNA containing multiple GUU triplets. In terms of tissue distribution, expressed predominantly in testis with lower levels in ovary. In testis, it is expressed in pachytene spermatocytes and at lower level in type-B spermatogonia, preleptotene and zygotene spermatocytes. In ovary, it is expressed in maturing follicles. In embryonic and prepuberal ovary, it is expressed in the oocyte and follicular cells.

The protein resides in the cytoplasm. RNA-binding protein, which is essential for gametogenesis in both males and females. Plays a central role during spermatogenesis. Acts by binding to the 3'-UTR of mRNA, specifically recognizing GUU triplets, and thereby regulating the translation of key transcripts. The protein is Deleted in azoospermia-like (Dazl) of Mus musculus (Mouse).